A 278-amino-acid polypeptide reads, in one-letter code: S-formylglutathione hydrolase YeiG (278 aa).

Catalysis depends on charge relay system residues Ser-145, Asp-223, and His-256.

This sequence belongs to the esterase D family.

The catalysed reaction is S-formylglutathione + H2O = formate + glutathione + H(+). In terms of biological role, serine hydrolase involved in the detoxification of formaldehyde. Hydrolyzes S-formylglutathione to glutathione and formate. The chain is S-formylglutathione hydrolase YeiG (yeiG) from Escherichia coli (strain SMS-3-5 / SECEC).